Consider the following 535-residue polypeptide: Bifunctional purine biosynthesis protein PurH (535 aa).

The MGS-like domain maps to 6 to 151 (TRLPIRRALI…KNHKDVAIVV (146 aa)).

This sequence belongs to the PurH family.

It catalyses the reaction (6R)-10-formyltetrahydrofolate + 5-amino-1-(5-phospho-beta-D-ribosyl)imidazole-4-carboxamide = 5-formamido-1-(5-phospho-D-ribosyl)imidazole-4-carboxamide + (6S)-5,6,7,8-tetrahydrofolate. The enzyme catalyses IMP + H2O = 5-formamido-1-(5-phospho-D-ribosyl)imidazole-4-carboxamide. It participates in purine metabolism; IMP biosynthesis via de novo pathway; 5-formamido-1-(5-phospho-D-ribosyl)imidazole-4-carboxamide from 5-amino-1-(5-phospho-D-ribosyl)imidazole-4-carboxamide (10-formyl THF route): step 1/1. It functions in the pathway purine metabolism; IMP biosynthesis via de novo pathway; IMP from 5-formamido-1-(5-phospho-D-ribosyl)imidazole-4-carboxamide: step 1/1. The polypeptide is Bifunctional purine biosynthesis protein PurH (Pseudomonas aeruginosa (strain LESB58)).